The sequence spans 405 residues: Cystathionine gamma-lyase (405 aa).

Arg62, Tyr114, and Arg119 together coordinate substrate. Position 212 is an N6-(pyridoxal phosphate)lysine (Lys212). Residue Glu339 coordinates substrate.

It belongs to the trans-sulfuration enzymes family. Homotetramer. Interacts with CALM in a calcium-dependent manner. Requires pyridoxal 5'-phosphate as cofactor.

It localises to the cytoplasm. The catalysed reaction is L,L-cystathionine + H2O = 2-oxobutanoate + L-cysteine + NH4(+). The protein operates within amino-acid biosynthesis; L-cysteine biosynthesis; L-cysteine from L-homocysteine and L-serine: step 2/2. Functionally, catalyzes the last step in the trans-sulfuration pathway from methionine to cysteine. Has broad substrate specificity. Converts cystathionine to cysteine, ammonia and 2-oxobutanoate. Converts two cysteine molecules to lanthionine and hydrogen sulfide. Can also accept homocysteine as substrate. Specificity depends on the levels of the endogenous substrates. Generates the endogenous signaling molecule hydrogen sulfide (H2S), and so contributes to the regulation of blood pressure. Acts as a cysteine-protein sulfhydrase by mediating sulfhydration of target proteins: sulfhydration consists of converting -SH groups into -SSH on specific cysteine residues of target proteins such as GAPDH, PTPN1 and NF-kappa-B subunit RELA, thereby regulating their function. This is Cystathionine gamma-lyase (CTH) from Bos taurus (Bovine).